The chain runs to 419 residues: Potassium/proton antiporter CemA (419 aa).

Transmembrane regions (helical) follow at residues 196–216, 297–317, 344–364, and 371–391; these read LASI…TLLF, IIEL…LCIA, ILLI…EVLI, and FGFV…PVVL.

The protein belongs to the CemA family.

It is found in the plastid. The protein resides in the chloroplast inner membrane. The enzyme catalyses K(+)(in) + H(+)(out) = K(+)(out) + H(+)(in). Contributes to K(+)/H(+) antiport activity by supporting proton efflux to control proton extrusion and homeostasis in chloroplasts in a light-dependent manner to modulate photosynthesis. Prevents excessive induction of non-photochemical quenching (NPQ) under continuous-light conditions. Indirectly promotes efficient inorganic carbon uptake into chloroplasts. This chain is Potassium/proton antiporter CemA, found in Chara vulgaris (Common stonewort).